Consider the following 462-residue polypeptide: Argininosuccinate lyase (462 aa).

It belongs to the lyase 1 family. Argininosuccinate lyase subfamily.

Its subcellular location is the cytoplasm. It catalyses the reaction 2-(N(omega)-L-arginino)succinate = fumarate + L-arginine. It functions in the pathway amino-acid biosynthesis; L-arginine biosynthesis; L-arginine from L-ornithine and carbamoyl phosphate: step 3/3. The polypeptide is Argininosuccinate lyase (Methylobacterium sp. (strain 4-46)).